The primary structure comprises 188 residues: MPLKDCDQPPELSIPPTFWYRSLVAAGLYCPEVHGPARYWLTVEGSFTRALQQKCQERFHVEILREGFSTPTPEEAKRLNLAPRQLAWVREVRLCGDGRPWVLARTVIPQTCLHGHGRRLRNLGNKPLGAYLFSSPEWQRGPLETGLCKARSNGHPRLARRSLFHRGSCALLVGEYLLPRLYQSPNRG.

Positions 90, 128, and 175 each coordinate substrate.

Belongs to the UbiC family.

The protein resides in the cytoplasm. It catalyses the reaction chorismate = 4-hydroxybenzoate + pyruvate. The protein operates within cofactor biosynthesis; ubiquinone biosynthesis. Its function is as follows. Removes the pyruvyl group from chorismate, with concomitant aromatization of the ring, to provide 4-hydroxybenzoate (4HB) for the ubiquinone pathway. The chain is Probable chorismate pyruvate-lyase from Marinobacter nauticus (strain ATCC 700491 / DSM 11845 / VT8) (Marinobacter aquaeolei).